We begin with the raw amino-acid sequence, 173 residues long: NADH-ubiquinone oxidoreductase chain 6 (173 aa).

The next 5 membrane-spanning stretches (helical) occupy residues 1-21, 25-45, 53-73, 82-102, and 141-161; these read MVYF…AVAS, PYFA…LLVG, LVLF…TAAL, WGDW…FFVG, and GIML…ILEL.

Belongs to the complex I subunit 6 family.

The protein resides in the mitochondrion membrane. It carries out the reaction a ubiquinone + NADH + 5 H(+)(in) = a ubiquinol + NAD(+) + 4 H(+)(out). Functionally, core subunit of the mitochondrial membrane respiratory chain NADH dehydrogenase (Complex I) that is believed to belong to the minimal assembly required for catalysis. Complex I functions in the transfer of electrons from NADH to the respiratory chain. The immediate electron acceptor for the enzyme is believed to be ubiquinone. This chain is NADH-ubiquinone oxidoreductase chain 6 (MT-ND6), found in Squalus acanthias (Spiny dogfish).